An 875-amino-acid polypeptide reads, in one-letter code: MGKTANSPGSGARPDPVRSFNRWKKKHSHRQNKKKQLRKQLKKPEWQVERESISRLMQNYEKINVNEITRFSDFPLSKKTLKGLQEAQYRLVTEIQKQTIGLALQGKDVLGAAKTGSGKTLAFLVPVLEALYRLQWTSTDGLGVLIISPTRELAYQTFEVLRKVGKNHDFSAGLIIGGKDLKHEAERINNINILVCTPGRLLQHMDETVSFHATDLQMLVLDEADRILDMGFADTMNAVIENLPKKRQTLLFSATQTKSVKDLARLSLKNPEYVWVHEKAKYSTPATLEQNYIVCELQQKISVLYSFLRSHLKKKSIVFFSSCKEVQYLYRVFCRLRPGVSILALHGRQQQMRRMEVYNEFVRKRAAVLFATDIAARGLDFPAVNWVLQFDCPEDANTYIHRAGRTARYKEDGEALLILLPSEKAMVQQLLQKKVPVKEIKINPEKLIDVQKKLESILAQDQDLKERAQRCFVSYVRSVYLMKDKEVFDVSKLPIPEYALSLGLAVAPRVRFLQKMQKQPTKELVRSQADKVIEPRAPSLTNDEVEEFRAYFNEKMSILQKGGKRLEGTEHRQDNDTGNEEQEEEEDDEEEMEEKLAKAKGSQAPSLPNTSEAQKIKEVPTQFLDRDEEEEDADFLKVKRHNVFGLDLKDEKTLQKKEPSKSSIKKKMTKVAEAKKVMKRNFKVNKKITFTDEGELVQQWPQMQKSAIKDAEEDDDTGGINLHKAKERLQEEDKFDKEEYRKKIKAKHREKRLKEREARREANKRQAKAKDEEEAFLDWSDDDDDDDDGFDPSTLPDPDKYRSSEDSDSEDMENKISDTKKKQGMKKRSNSEVEDVGPTSHNRKKARWDTLEPLDTGLSLAEDEELVLHLLRSQS.

Residues 1 to 43 (MGKTANSPGSGARPDPVRSFNRWKKKHSHRQNKKKQLRKQLKK) are disordered. The residue at position 4 (Thr4) is a Phosphothreonine. At Ser7 the chain carries Phosphoserine. Residues 21-41 (NRWKKKHSHRQNKKKQLRKQL) show a composition bias toward basic residues. The Q motif motif lies at 69–97 (TRFSDFPLSKKTLKGLQEAQYRLVTEIQK). Residues 89–91 (YRL), Gln96, and 113–120 (AKTGSGKT) contribute to the ATP site. In terms of domain architecture, Helicase ATP-binding spans 100-274 (IGLALQGKDV…RLSLKNPEYV (175 aa)). The DEAD box signature appears at 222–225 (DEAD). One can recognise a Helicase C-terminal domain in the interval 287–448 (TLEQNYIVCE…EIKINPEKLI (162 aa)). Ser539 is modified (phosphoserine). The residue at position 555 (Lys555) is an N6-acetyllysine. Positions 562–631 (GGKRLEGTEH…QFLDRDEEEE (70 aa)) are disordered. Over residues 564–575 (KRLEGTEHRQDN) the composition is skewed to basic and acidic residues. Phosphothreonine is present on Thr577. Residues 577–593 (TGNEEQEEEEDDEEEME) show a composition bias toward acidic residues. Polar residues predominate over residues 603–613 (QAPSLPNTSEA). Residue Lys649 forms a Glycyl lysine isopeptide (Lys-Gly) (interchain with G-Cter in SUMO2) linkage. Positions 703-850 (MQKSAIKDAE…HNRKKARWDT (148 aa)) are disordered. The span at 727-741 (ERLQEEDKFDKEEYR) shows a compositional bias: basic and acidic residues. The span at 742–751 (KKIKAKHREK) shows a compositional bias: basic residues. Residues 752 to 771 (RLKEREARREANKRQAKAKD) show a composition bias toward basic and acidic residues. A compositionally biased stretch (acidic residues) spans 772–790 (EEEAFLDWSDDDDDDDDGF). Position 780 is a phosphoserine (Ser780). Residues 812 to 821 (MENKISDTKK) are compositionally biased toward basic and acidic residues. Ser831 is modified (phosphoserine).

Belongs to the DEAD box helicase family. DDX10/DBP4 subfamily. As to quaternary structure, interacts with AIM2; this interaction promotes AIM2 stability. Interacts with SCNA; this interaction causes DDX10 mislocalization to the nucleoplasm and cytoplasmic inclusions. In terms of tissue distribution, high in testis but widely expressed.

The protein localises to the cytoplasm. It is found in the nucleus. Its subcellular location is the nucleolus. The catalysed reaction is ATP + H2O = ADP + phosphate + H(+). Functionally, putative ATP-dependent RNA helicase that plays various role in innate immunity or inflammation. Plays a role in the enhancement of AIM2-induced inflammasome activation by interacting with AIM2 and stabilizing its protein level. Negatively regulates viral infection by promoting interferon beta production and interferon stimulated genes/ISGs expression. This is Probable ATP-dependent RNA helicase DDX10 (DDX10) from Homo sapiens (Human).